Consider the following 252-residue polypeptide: Trans-aconitate 2-methyltransferase (252 aa).

This sequence belongs to the methyltransferase superfamily. Tam family.

Its subcellular location is the cytoplasm. It carries out the reaction trans-aconitate + S-adenosyl-L-methionine = (E)-3-(methoxycarbonyl)pent-2-enedioate + S-adenosyl-L-homocysteine. In terms of biological role, catalyzes the S-adenosylmethionine monomethyl esterification of trans-aconitate. The polypeptide is Trans-aconitate 2-methyltransferase (Shigella flexneri).